We begin with the raw amino-acid sequence, 524 residues long: Chromosomal replication initiator protein DnaA (524 aa).

The domain I, interacts with DnaA modulators stretch occupies residues 1–73 (MELPESAWEQ…DELLSSADHH (73 aa)). Positions 73–187 (HPITSVEISV…DVEGGLQHKS (115 aa)) are domain II. Polar residues-rich tracts occupy residues 86-95 (RSTSFETNQG), 106-126 (APRQ…QPQQ), and 153-165 (NGYN…QPYN). Positions 86-173 (RSTSFETNQG…YNDNPMGQGK (88 aa)) are disordered. Residues 188–404 (NLNPTFIFDN…GALKRVIANA (217 aa)) form a domain III, AAA+ region region. ATP is bound by residues glycine 232, glycine 234, lysine 235, and threonine 236. Positions 405–524 (HFTGRDISVE…VKNLLRTLTT (120 aa)) are domain IV, binds dsDNA.

The protein belongs to the DnaA family. As to quaternary structure, oligomerizes as a right-handed, spiral filament on DNA at oriC.

The protein localises to the cytoplasm. Its function is as follows. Plays an essential role in the initiation and regulation of chromosomal replication. ATP-DnaA binds to the origin of replication (oriC) to initiate formation of the DNA replication initiation complex once per cell cycle. Binds the DnaA box (a 9 base pair repeat at the origin) and separates the double-stranded (ds)DNA. Forms a right-handed helical filament on oriC DNA; dsDNA binds to the exterior of the filament while single-stranded (ss)DNA is stabiized in the filament's interior. The ATP-DnaA-oriC complex binds and stabilizes one strand of the AT-rich DNA unwinding element (DUE), permitting loading of DNA polymerase. After initiation quickly degrades to an ADP-DnaA complex that is not apt for DNA replication. Binds acidic phospholipids. This Saccharophagus degradans (strain 2-40 / ATCC 43961 / DSM 17024) protein is Chromosomal replication initiator protein DnaA.